The sequence spans 450 residues: MAQFFKAKPNSSKQLSAKLSLSVNQLDHLGAGIAQHQGKVVFIPGALPDETVTVQLTEQKKNYARAKLIKVDTPSSERVEPECPHYHTCGGCDLQHMSLSGQREHKEAALLDIMAKFAGAEGGALSPALTGEGWHYRRRARLATLFDKNTKHLSLGFRAASSSNVVPISQCQVLAKPLSDLIVPFAKLLNQLSAKASLGHLELIAADNGHFAVLRITKALNDKDLAKLSAFAEQHQIHICLQDNEGQFQGVGAELVLPVYQLLDDKAESDAVSLSFTPGNFVQVNGQINKAMVAQAMDWLAPAPDERILDLFCGMGNFSLPLAKMGADVIGVEGVAEMVTQARVNAKANNLDKLTFYHGDLSADLSLEPWMGKIDKLLLDPARAGAFESLQWLKKMKPRKVVYVSCNPASLARDSAVLLERGYRLQQLGLIDMFPQTHHIEAMALFELTK.

One can recognise a TRAM domain in the interval 12-70 (SKQLSAKLSLSVNQLDHLGAGIAQHQGKVVFIPGALPDETVTVQLTEQKKNYARAKLIK). [4Fe-4S] cluster-binding residues include C83, C89, C92, and C171. The S-adenosyl-L-methionine site is built by Q283, F312, N317, E333, D360, and D380. The Nucleophile role is filled by C406.

This sequence belongs to the class I-like SAM-binding methyltransferase superfamily. RNA M5U methyltransferase family. RlmD subfamily.

The enzyme catalyses uridine(1939) in 23S rRNA + S-adenosyl-L-methionine = 5-methyluridine(1939) in 23S rRNA + S-adenosyl-L-homocysteine + H(+). Catalyzes the formation of 5-methyl-uridine at position 1939 (m5U1939) in 23S rRNA. This is 23S rRNA (uracil(1939)-C(5))-methyltransferase RlmD from Shewanella baltica (strain OS195).